The following is a 301-amino-acid chain: Triplex capsid protein 2 (301 aa).

The protein belongs to the herpesviridae TRX2 protein family. Interacts with TRX1 and major capisd protein/MCP.

Its subcellular location is the virion. The protein localises to the host nucleus. Structural component of the T=16 icosahedral capsid. The capsid is composed of pentamers and hexamers of major capsid protein/MCP, which are linked together by heterotrimers called triplexes. These triplexes are formed by a single molecule of triplex protein 1/TRX1 and two copies of triplex protein 2/TRX2. Additionally, TRX1 is required for efficient transport of TRX2 to the nucleus, which is the site of capsid assembly. This chain is Triplex capsid protein 2, found in Homo sapiens (Human).